Reading from the N-terminus, the 172-residue chain is Probable calcium-binding protein CML28 (172 aa).

EF-hand domains follow at residues Met1–Phe36, Ile37–Asp72, Asp95–Lys130, and Arg133–Ala168. Residues Asp14, Asn16, Asp18, Arg20, Glu25, Asp50, Asn52, Asp54, Cys56, Glu61, Asp108, Asn110, Asp112, Glu119, Asp146, Asp148, Asp150, Arg152, and Glu157 each coordinate Ca(2+).

Functionally, potential calcium sensor. This is Probable calcium-binding protein CML28 (CML28) from Oryza sativa subsp. japonica (Rice).